The following is a 217-amino-acid chain: tRNA (guanine-N(7)-)-methyltransferase (217 aa).

S-adenosyl-L-methionine is bound by residues E44, E69, D96, and D118. The active site involves D118. Residues K122, D154, and 191–194 (TEYE) contribute to the substrate site.

Belongs to the class I-like SAM-binding methyltransferase superfamily. TrmB family.

It carries out the reaction guanosine(46) in tRNA + S-adenosyl-L-methionine = N(7)-methylguanosine(46) in tRNA + S-adenosyl-L-homocysteine. The protein operates within tRNA modification; N(7)-methylguanine-tRNA biosynthesis. Functionally, catalyzes the formation of N(7)-methylguanine at position 46 (m7G46) in tRNA. The chain is tRNA (guanine-N(7)-)-methyltransferase from Bacillus thuringiensis (strain Al Hakam).